The sequence spans 147 residues: Large ribosomal subunit protein uL15 (147 aa).

The tract at residues 1-62 (MKLHELKPAQ…GQQPLSRRMP (62 aa)) is disordered. Gly residues-rich tracts occupy residues 21–31 (RGIGSGTGKTS) and 42–52 (AGGGVRPGFEG).

It belongs to the universal ribosomal protein uL15 family. As to quaternary structure, part of the 50S ribosomal subunit.

In terms of biological role, binds to the 23S rRNA. The sequence is that of Large ribosomal subunit protein uL15 from Desulfitobacterium hafniense (strain DSM 10664 / DCB-2).